The primary structure comprises 202 residues: Large ribosomal subunit protein uL4 (202 aa).

The segment covering 42-52 (GTKAQKSRSQV) has biased composition (polar residues). Residues 42 to 70 (GTKAQKSRSQVSGTTKKSKKQKGGGARHG) are disordered.

The protein belongs to the universal ribosomal protein uL4 family. Part of the 50S ribosomal subunit.

Its function is as follows. One of the primary rRNA binding proteins, this protein initially binds near the 5'-end of the 23S rRNA. It is important during the early stages of 50S assembly. It makes multiple contacts with different domains of the 23S rRNA in the assembled 50S subunit and ribosome. Forms part of the polypeptide exit tunnel. The chain is Large ribosomal subunit protein uL4 from Xylella fastidiosa (strain 9a5c).